A 1202-amino-acid chain; its full sequence is Calmodulin-binding transcription activator 2 (1202 aa).

Residues 30–155 (RCPLLPPERL…YLNVPALEDC (126 aa)) constitute a DNA-binding region (CG-1). The Nuclear localization signal signature appears at 79–86 (RKKVKYRK). Disordered regions lie at residues 263–322 (SIPH…SRGG), 361–409 (GTEP…AHTP), and 421–491 (PQAA…LFGG). Positions 270-283 (PEPPPLIAPLPPEL) are enriched in pro residues. Composition is skewed to low complexity over residues 289-299 (SPSSSSSSSSS) and 313-322 (TSRGGSSRGG). Pro residues-rich tracts occupy residues 365–374 (SAPPAPPSPA) and 460–476 (PPIPSPPPSPPPSPAPL). An IPT/TIG domain is found at 537-615 (DFSPEWSYPE…LSASVLFEYR (79 aa)). 3 ANK repeats span residues 712–745 (MSLLHLAAAQGYARLIETLSQWRSVETGSLDLEQ), 757–787 (CTPLMWACALGHLEAAVLLFRWNRQALSIPD), and 791–821 (RLPLSVAHSRGHVRLARCLEELQRQEPSVEP). Disordered regions lie at residues 817–874 (PSVE…ASEM) and 906–929 (PLSSLPALPPASDDGAAPEDADSP). Composition is skewed to low complexity over residues 826–846 (SPPSSSPDTGLSSVSSPSELS) and 906–917 (PLSSLPALPPAS). IQ domains are found at residues 1049-1078 (YEAARVIQTAFRKYKGRRLKEQQEVAAAVI) and 1102-1131 (TQAAILIQSKFRSYYEQKRFQQSRRAAVLI).

It belongs to the CAMTA family. May interact with calmodulin. Detected in brain. Expressed at constant levels throughout the cell cycle in neuroblastoma cell lines.

Its subcellular location is the nucleus. In terms of biological role, transcription activator. May act as tumor suppressor. This Homo sapiens (Human) protein is Calmodulin-binding transcription activator 2 (CAMTA2).